Consider the following 240-residue polypeptide: Adapter protein MecA (240 aa).

Over residues 119–132 (QRKQQKKNHQDKQQ) the composition is skewed to basic and acidic residues. The disordered stretch occupies residues 119–138 (QRKQQKKNHQDKQQRRAHKP).

This sequence belongs to the MecA family. As to quaternary structure, homodimer.

In terms of biological role, enables the recognition and targeting of unfolded and aggregated proteins to the ClpC protease or to other proteins involved in proteolysis. This chain is Adapter protein MecA, found in Staphylococcus epidermidis (strain ATCC 35984 / DSM 28319 / BCRC 17069 / CCUG 31568 / BM 3577 / RP62A).